The sequence spans 260 residues: Isoprenyl transferase (260 aa).

Residue Asp40 is part of the active site. Asp40 contacts Mg(2+). Residues 41-44 (GNGR), Trp45, Arg53, His57, and 85-87 (STE) contribute to the substrate site. Catalysis depends on Asn88, which acts as the Proton acceptor. Substrate contacts are provided by residues Trp89, Arg91, Arg208, and 214–216 (RLS). Mg(2+) is bound at residue Glu227.

This sequence belongs to the UPP synthase family. In terms of assembly, homodimer. Mg(2+) serves as cofactor.

Its function is as follows. Catalyzes the condensation of isopentenyl diphosphate (IPP) with allylic pyrophosphates generating different type of terpenoids. The chain is Isoprenyl transferase from Bacillus subtilis (strain 168).